Reading from the N-terminus, the 188-residue chain is Elongation factor P (188 aa).

Belongs to the elongation factor P family.

The protein localises to the cytoplasm. The protein operates within protein biosynthesis; polypeptide chain elongation. Functionally, involved in peptide bond synthesis. Stimulates efficient translation and peptide-bond synthesis on native or reconstituted 70S ribosomes in vitro. Probably functions indirectly by altering the affinity of the ribosome for aminoacyl-tRNA, thus increasing their reactivity as acceptors for peptidyl transferase. The chain is Elongation factor P from Leptospira interrogans serogroup Icterohaemorrhagiae serovar copenhageni (strain Fiocruz L1-130).